Here is a 119-residue protein sequence, read N- to C-terminus: Large ribosomal subunit protein uL14 (119 aa).

This sequence belongs to the universal ribosomal protein uL14 family. As to quaternary structure, part of the 50S ribosomal subunit. Forms a cluster with proteins L3 and L19. In the 70S ribosome, L14 and L19 interact and together make contacts with the 16S rRNA in bridges B5 and B8.

Binds to 23S rRNA. Forms part of two intersubunit bridges in the 70S ribosome. This is Large ribosomal subunit protein uL14 from Ehrlichia chaffeensis (strain ATCC CRL-10679 / Arkansas).